The primary structure comprises 566 residues: Arginine--tRNA ligase (566 aa).

The 'HIGH' region motif lies at 123-133 (PNIAKPFHIGH).

It belongs to the class-I aminoacyl-tRNA synthetase family. As to quaternary structure, monomer.

Its subcellular location is the cytoplasm. The enzyme catalyses tRNA(Arg) + L-arginine + ATP = L-arginyl-tRNA(Arg) + AMP + diphosphate. In Clostridioides difficile (strain 630) (Peptoclostridium difficile), this protein is Arginine--tRNA ligase.